An 875-amino-acid polypeptide reads, in one-letter code: Ubiquitin-protein ligase E3A (875 aa).

Residues 44–83 (CGNEACTNEFCASCPTFLRMDNNAAAIKALELYKINAKLC) form a C4-type; atypical zinc finger. Over residues 175–186 (KEELKSLQAKDE) the composition is skewed to basic and acidic residues. The tract at residues 175-226 (KEELKSLQAKDEDKDEDEKEKAACSAAAMEEDSEASSSRIGDSSQGDNNLQK) is disordered. Residues 213-225 (RIGDSSQGDNNLQ) show a composition bias toward polar residues. At Ser218 the chain carries Phosphoserine. Residues 401-418 (IPESSELTLQELLGEERR) form an E6-binding region. The segment at 418–517 (RNKKGPRVDP…TVLYSLVQGQ (100 aa)) is interaction with HCV core protein. At Tyr659 the chain carries Phosphotyrosine; by ABL1. The 100-residue stretch at 776-875 (YDGGYTRDSV…ITYAKGFGML (100 aa)) folds into the HECT domain. Cys843 (glycyl thioester intermediate) is an active-site residue.

The active form is probably a homotrimer. Binds UBQLN1 and UBQLN2. Interacts with the 26S proteasome. Interacts with BPY2. Interacts with HIF1AN, MAPK6 and NEURL4; interaction with MAPK6 may be mediated by NEURL4. Interacts with the proteasomal subunit PSMD4. Interacts with ESR1 and WBP2. Interacts with BMAL1. Interacts with ARC. As to quaternary structure, (Microbial infection) Interacts with HCV core protein and targets it to degradation. In terms of assembly, (Microbial infection) Interacts with the E6 protein of the cancer-associated human papillomavirus types 16 and 18. The E6/E6-AP complex binds to and targets the p53/TP53 tumor-suppressor protein for ubiquitin-mediated proteolysis. Phosphorylation at Tyr-659 by ABL1 impairs E3 ligase activity and protects p53/TP53 from degradation in (HPV)-infected cells.

The protein resides in the cytoplasm. Its subcellular location is the nucleus. The enzyme catalyses S-ubiquitinyl-[E2 ubiquitin-conjugating enzyme]-L-cysteine + [acceptor protein]-L-lysine = [E2 ubiquitin-conjugating enzyme]-L-cysteine + N(6)-ubiquitinyl-[acceptor protein]-L-lysine.. Its pathway is protein modification; protein ubiquitination. Its function is as follows. E3 ubiquitin-protein ligase which accepts ubiquitin from an E2 ubiquitin-conjugating enzyme in the form of a thioester and transfers it to its substrates. Several substrates have been identified including the BMAL1, ARC, LAMTOR1, RAD23A and RAD23B, MCM7 (which is involved in DNA replication), annexin A1, the PML tumor suppressor, and the cell cycle regulator CDKN1B. Additionally, may function as a cellular quality control ubiquitin ligase by helping the degradation of the cytoplasmic misfolded proteins. Finally, UBE3A also promotes its own degradation in vivo. Plays an important role in the regulation of the circadian clock: involved in the ubiquitination of the core clock component BMAL1, leading to its proteasomal degradation. Acts as transcriptional coactivator of progesterone receptor PGR upon progesterone hormone activation. Acts as a regulator of synaptic development by mediating ubiquitination and degradation of ARC. Required for synaptic remodeling in neurons by mediating ubiquitination and degradation of LAMTOR1, thereby limiting mTORC1 signaling and activity-dependent synaptic remodeling. Synergizes with WBP2 in enhancing PGR activity. Functionally, (Microbial infection) Catalyzes the high-risk human papilloma virus E6-mediated ubiquitination of p53/TP53, contributing to the neoplastic progression of cells infected by these viruses. In Homo sapiens (Human), this protein is Ubiquitin-protein ligase E3A.